The primary structure comprises 339 residues: MRSKIKLSLIANKTSRRTTFRKRKGGITNKLHELTTLCGVKACAVISSPYENPVVWPSTEGVQEAVSMFMERPATEQSKLMMSHETYLQDKITKETKKLESLRRENRESQLRQFMFDCVEGKMSEHQYGARDLQDLSLYIDHYINQLNSSVMLLTNNGASSSSFPPPLHTSVAGAGAGAGAAPLVVAGAGAAPLAVAGAGASPLAVAGVGAAPLAVAGAGPPMAQNQYEPIQPYIPTAFSDNIQYQAPVDFNHQIQHGIYDNLSLDPNHQYPFQDDPFMEMLMEYPYEQVGYAAEHAHIPFMNGNYYNYHQPPTVGLTTTGHMPSNNATTTTTTNTTVV.

The MADS-box domain maps to 1 to 60; sequence MRSKIKLSLIANKTSRRTTFRKRKGGITNKLHELTTLCGVKACAVISSPYENPVVWPSTE. Residues 86–112 are a coiled coil; it reads TYLQDKITKETKKLESLRRENRESQLR.

As to quaternary structure, interacts with AGL61/DIANA and AGL62.

The protein resides in the nucleus. Probable transcription factor. This is Agamous-like MADS-box protein AGL86 (AGL86) from Arabidopsis thaliana (Mouse-ear cress).